Reading from the N-terminus, the 382-residue chain is Cholinephosphotransferase 1 (382 aa).

At 1-51 (MPQCECPEPLSAVQLKRLEEHKYSAAGRSLFEPPCQIYWNWLVQQIPTWVA) the chain is on the cytoplasmic side. A helical membrane pass occupies residues 52-72 (PNTLTTIGLVINVITTVILVY). Residue asparagine 53 coordinates CDP-choline. The Lumenal portion of the chain corresponds to 73–82 (YSPTATEEVP). Residues 83-107 (GWAFFLSALGLFIYQSLDAIDGKQA) traverse the membrane as a helical segment. The Mg(2+) site is built by aspartate 100 and aspartate 103. Arginine 108 is a CDP-choline binding site. Residues 108 to 114 (RRTNSSS) lie on the Cytoplasmic side of the membrane. A helical transmembrane segment spans residues 115-139 (ALGELFDHGCDAVSTVFVAVGTCIC). Aspartate 121 lines the Mg(2+) pocket. Histidine 122 (proton acceptor) is an active-site residue. Aspartate 125 provides a ligand contact to Mg(2+). Residues 140–149 (CGIGAYPNWM) are Lumenal-facing. A helical membrane pass occupies residues 150-168 (FFCGFVGMFMFFCAHWQTY). Topologically, residues 169 to 179 (VSGTLRFGLVD) are cytoplasmic. The chain crosses the membrane as a helical span at residues 180-196 (VTEVQIAIIIMYLLTAF). At 197-211 (TGVSFWEMRVPVLGV) the chain is on the lumenal side. The chain crosses the membrane as a helical span at residues 212-237 (NLQTFPILGIIGGFLYSTYNYFFVIM). Over 238–254 (NGGVGKNGSTVADTSVL) the chain is Cytoplasmic. A helical membrane pass occupies residues 255–270 (TPGLHIGLILTLAFII). The Lumenal portion of the chain corresponds to 271 to 282 (FKKSSSHLFEHH). A helical membrane pass occupies residues 283–305 (PCLYVLTFGMVIAKISNKLVVAH). The Cytoplasmic segment spans residues 306–318 (MTKSELHLQDTAF). A helical transmembrane segment spans residues 319-328 (IGPGLLFLNQ). The Lumenal portion of the chain corresponds to 329–335 (YFNSYID). A helical membrane pass occupies residues 336 to 365 (EHIVLWIAMVLSLVDLVRYCTAVCLQIASH). At 366-382 (LRIRVFSISPQGHAHKD) the chain is on the cytoplasmic side.

It belongs to the CDP-alcohol phosphatidyltransferase class-I family. The cofactor is Mg(2+). It depends on Mn(2+) as a cofactor.

It is found in the golgi apparatus membrane. The catalysed reaction is CDP-choline + a 1,2-diacyl-sn-glycerol = a 1,2-diacyl-sn-glycero-3-phosphocholine + CMP + H(+). It carries out the reaction 1-octadecanoyl-2-(5Z,8Z,11Z,14Z-eicosatetraenoyl)-sn-glycerol + CDP-choline = 1-octadecanoyl-2-(5Z,8Z,11Z,14Z-eicosatetraenoyl)-sn-glycero-3-phosphocholine + CMP + H(+). The enzyme catalyses 1-hexadecanoyl-2-(9Z-octadecenoyl)-sn-glycerol + CDP-choline = 1-hexadecanoyl-2-(9Z-octadecenoyl)-sn-glycero-3-phosphocholine + CMP + H(+). It catalyses the reaction 1-hexadecanoyl-2-(4Z,7Z,10Z,13Z,16Z,19Z-docosahexaenoyl)-sn-glycerol + CDP-choline = 1-hexadecanoyl-2-(4Z,7Z,10Z,13Z,16Z,19Z-docosahexaenoyl)-sn-glycero-3-phosphocholine + CMP + H(+). The catalysed reaction is 1,2-dioctanoyl-sn-glycerol + CDP-choline = 1,2-dioctanoyl-sn-glycero-3-phosphocholine + CMP + H(+). It participates in phospholipid metabolism; phosphatidylcholine biosynthesis; phosphatidylcholine from phosphocholine: step 2/2. Functionally, catalyzes the final step of de novo phosphatidylcholine (PC) synthesis, i.e. the transfer of choline phosphate from CDP-choline to the free hydroxyl of a diacylglycerol (DAG), producing a PC. It thereby plays a central role in the formation and maintenance of vesicular membranes. The polypeptide is Cholinephosphotransferase 1 (chpt1) (Danio rerio (Zebrafish)).